Consider the following 404-residue polypeptide: Cysteine desulfurase IscS (404 aa).

Pyridoxal 5'-phosphate contacts are provided by residues 75 to 76 (AT), N155, Q183, and 203 to 205 (SAH). K206 carries the N6-(pyridoxal phosphate)lysine modification. Residue T243 coordinates pyridoxal 5'-phosphate. Residue C328 is the Cysteine persulfide intermediate of the active site. C328 provides a ligand contact to [2Fe-2S] cluster.

This sequence belongs to the class-V pyridoxal-phosphate-dependent aminotransferase family. NifS/IscS subfamily. As to quaternary structure, homodimer. Forms a heterotetramer with IscU, interacts with other sulfur acceptors. The cofactor is pyridoxal 5'-phosphate.

It localises to the cytoplasm. The catalysed reaction is (sulfur carrier)-H + L-cysteine = (sulfur carrier)-SH + L-alanine. It functions in the pathway cofactor biosynthesis; iron-sulfur cluster biosynthesis. Functionally, master enzyme that delivers sulfur to a number of partners involved in Fe-S cluster assembly, tRNA modification or cofactor biosynthesis. Catalyzes the removal of elemental sulfur atoms from cysteine to produce alanine. Functions as a sulfur delivery protein for Fe-S cluster synthesis onto IscU, an Fe-S scaffold assembly protein, as well as other S acceptor proteins. This chain is Cysteine desulfurase IscS, found in Shewanella sediminis (strain HAW-EB3).